The chain runs to 811 residues: MLVSYNWLKNYVNLDAVTPEELAAKITKSGIEVEGVEYIAEKNENIVVGYVETCEKHPDADKLNVTQVSVGEETLQIVCGAPNIAKGQKVAVAKPGAVLPGNMKIKKVKLRGVESNGMICSLQELGLEEKYIPTDIAEGIFVFPEDEDIEVGSKVDEWLNLTDAVLDLDVLANRPDALSMLGVAYEVAAVLDQPIELPTKNIDYIDEKVSDQIEINIESKDLNPYYAAFMVKDVVIKPSPLWMRNYLMASGIRPINNIVDITNYVLLEYGQPLHAFDFDRFASNQIVIRRGVEGEVIQTLDEQERKLTEDNLVITNGSEPVALAGVMGGANSEVTDKTVNVLLEAAYFEATAVRHTVRQTGLRSESSTRFEKGIDPNRIVEAGLRACQLMQRYAGGKVLQGFAEENHLDTKSTKEVKVPLTQVNQRLGMELTEKDVQSVLNRLKFDFDQDGHTFIVHVPTRRRDITIFEDMLEEIIRIHGYDHLPYTIPQGWVKSGGLTDKQLLQRKIREFMMSSGAMETLTYSLTNEQNVKRLVTPNIDLENSYPISLAMPMSEDHKYLRLSIVPELLRILQHNIARKQTDLNYFEIGKVFISEEQELTHQPTEKLHLAGAFTGLWHNHPWQQDKKQVDFFVVKGIIEGLFNYLQLNISFKQVKMKDMHPGRCAELNIDGENIGFMGQLHPKTANVFDLPETYVFEIDLESVFEKYINVPSFTDIPRYPSVSRDIAFILDTEVFSGEVQQYIQEIGAPLVKEVSIFDVYQGEHLEDGKKSVAYRLMYQDPAKTLQDDEVESSYQQIVEAVNKKFGSYVRS.

The region spanning 40 to 156 is the tRNA-binding domain; that stretch reads AEKNENIVVG…EDIEVGSKVD (117 aa). Positions 411-486 constitute a B5 domain; that stretch reads KSTKEVKVPL…RIHGYDHLPY (76 aa). Mg(2+) is bound by residues aspartate 464, aspartate 470, glutamate 473, and glutamate 474. One can recognise an FDX-ACB domain in the interval 717–810; that stretch reads PRYPSVSRDI…VNKKFGSYVR (94 aa).

Belongs to the phenylalanyl-tRNA synthetase beta subunit family. Type 1 subfamily. In terms of assembly, tetramer of two alpha and two beta subunits. Mg(2+) is required as a cofactor.

It localises to the cytoplasm. The enzyme catalyses tRNA(Phe) + L-phenylalanine + ATP = L-phenylalanyl-tRNA(Phe) + AMP + diphosphate + H(+). This Oceanobacillus iheyensis (strain DSM 14371 / CIP 107618 / JCM 11309 / KCTC 3954 / HTE831) protein is Phenylalanine--tRNA ligase beta subunit.